Consider the following 284-residue polypeptide: NADPH-dependent 7-cyano-7-deazaguanine reductase (284 aa).

A substrate-binding site is contributed by 91 to 93 (IES). 93–94 (SK) is an NADPH binding site. Cys-192 (thioimide intermediate) is an active-site residue. Catalysis depends on Asp-199, which acts as the Proton donor. Residue 231–232 (HE) participates in substrate binding. 260–261 (RG) serves as a coordination point for NADPH.

This sequence belongs to the GTP cyclohydrolase I family. QueF type 2 subfamily. In terms of assembly, homodimer.

The protein localises to the cytoplasm. The catalysed reaction is 7-aminomethyl-7-carbaguanine + 2 NADP(+) = 7-cyano-7-deazaguanine + 2 NADPH + 3 H(+). The protein operates within tRNA modification; tRNA-queuosine biosynthesis. Functionally, catalyzes the NADPH-dependent reduction of 7-cyano-7-deazaguanine (preQ0) to 7-aminomethyl-7-deazaguanine (preQ1). In Shewanella denitrificans (strain OS217 / ATCC BAA-1090 / DSM 15013), this protein is NADPH-dependent 7-cyano-7-deazaguanine reductase.